The sequence spans 325 residues: NADH-quinone oxidoreductase subunit H (325 aa).

9 helical membrane-spanning segments follow: residues 11-31 (ILLS…CGAF), 50-69 (NRVG…KMFF), 81-101 (VIFT…FAIV), 114-134 (IGIL…LFAG), 154-174 (LSYE…AGSF), 186-206 (IWNV…GVAV), 237-257 (FFVG…TLFF), 265-285 (LPPF…FILI), and 304-324 (VCLP…LWQA).

The protein belongs to the complex I subunit 1 family. As to quaternary structure, NDH-1 is composed of 13 different subunits. Subunits NuoA, H, J, K, L, M, N constitute the membrane sector of the complex.

It is found in the cell inner membrane. It catalyses the reaction a quinone + NADH + 5 H(+)(in) = a quinol + NAD(+) + 4 H(+)(out). Its function is as follows. NDH-1 shuttles electrons from NADH, via FMN and iron-sulfur (Fe-S) centers, to quinones in the respiratory chain. The immediate electron acceptor for the enzyme in this species is believed to be ubiquinone. Couples the redox reaction to proton translocation (for every two electrons transferred, four hydrogen ions are translocated across the cytoplasmic membrane), and thus conserves the redox energy in a proton gradient. This subunit may bind ubiquinone. The protein is NADH-quinone oxidoreductase subunit H of Citrobacter koseri (strain ATCC BAA-895 / CDC 4225-83 / SGSC4696).